Consider the following 42-residue polypeptide: Iota-conotoxin-like R11.16 (42 aa).

4 disulfide bridges follow: Cys5–Cys19, Cys12–Cys22, Cys18–Cys27, and Cys21–Cys36.

The protein belongs to the conotoxin I1 superfamily. As to expression, expressed by the venom duct.

The protein resides in the secreted. Iota-conotoxins bind to voltage-gated sodium channels (Nav) and act as agonists by shifting the voltage-dependence of activation to more hyperpolarized levels. Produces general excitatory symptoms. The sequence is that of Iota-conotoxin-like R11.16 from Conus radiatus (Rayed cone).